Here is a 327-residue protein sequence, read N- to C-terminus: MQQLTEIVEQALVIIDQASDLKALDDIRVDYLGKKGKITDMMKMMGSLSPEEKPAFGQAVNDAKQAIQQKLTERIDGLKSSELEAKLIAEKIDVTLPGRTQEIGGLHPVTRTIERIETFFGELGFSVKQGPEIEDDFHNFDALNISEHHPARADHDTFYFNPKLMLRTQTSGVQIRTMETEKPPLRIISPGRVYRNDYDQTHTPMFHQVEGLLVDEHVNFAELKGILHDFLRNFFEEDLQVRFRPSYFPFTEPSAEVDVMGKNGKWLEVLGCGMVHPNVLRSVGIDPEKYSGFAFGMGVERLTMLRYGVNDLRAFFENDLRFLKQFK.

A Mg(2+)-binding site is contributed by Glu-252.

It belongs to the class-II aminoacyl-tRNA synthetase family. Phe-tRNA synthetase alpha subunit type 1 subfamily. As to quaternary structure, tetramer of two alpha and two beta subunits. It depends on Mg(2+) as a cofactor.

The protein localises to the cytoplasm. It catalyses the reaction tRNA(Phe) + L-phenylalanine + ATP = L-phenylalanyl-tRNA(Phe) + AMP + diphosphate + H(+). This chain is Phenylalanine--tRNA ligase alpha subunit, found in Shewanella baltica (strain OS185).